The sequence spans 1156 residues: Nitric oxide synthase, inducible (1156 aa).

The DINNN-motif; mediates interaction with SPSB1, SPSB2 and SPSB4 signature appears at aspartate 23–asparagine 27. A disordered region spans residues asparagine 27 to histidine 84. Positions glutamate 55 to serine 70 are enriched in polar residues. Cysteine 110 and cysteine 115 together coordinate Zn(2+). Serine 118 lines the (6R)-L-erythro-5,6,7,8-tetrahydrobiopterin pocket. Heme b is bound at residue cysteine 200. L-arginine is bound by residues glutamine 263, tryptophan 372, tyrosine 373, and glutamate 377. Arginine 381, isoleucine 462, tryptophan 463, and phenylalanine 476 together coordinate (6R)-L-erythro-5,6,7,8-tetrahydrobiopterin. Tyrosine 491 provides a ligand contact to heme b. The interval phenylalanine 515–serine 535 is calmodulin-binding. Residues alanine 539 to phenylalanine 677 form the Flavodoxin-like domain. The FMN site is built by threonine 545, glutamate 546, threonine 547, arginine 549, and serine 550. The residue at position 575 (tyrosine 575) is a Phosphotyrosine. FMN contacts are provided by serine 591, threonine 592, serine 628, cysteine 635, glutamate 661, and glutamine 665. Residues lysine 730–proline 970 enclose the FAD-binding FR-type domain. Arginine 750 serves as a coordination point for NADP(+). FAD contacts are provided by histidine 772, arginine 906, tyrosine 908, serine 909, threonine 924, and alanine 926. NADP(+) is bound at residue threonine 929. Tyrosine 930, valine 943, cysteine 944, and serine 945 together coordinate FAD. The NADP(+) site is built by threonine 984, arginine 1017, serine 1046, arginine 1047, lysine 1053, tyrosine 1055, glutamine 1057, and aspartate 1090.

It belongs to the NOS family. In terms of assembly, homodimer. Interacts with NHERF1. Interacts with GAPDH; induced by oxidatively-modified low-densitity lipoprotein (LDL(ox)). Interacts with S100A8 and S100A9 to form the iNOS-S100A8/9 transnitrosylase complex. Interacts with SPSB1, SPSB2 and SPSB4. Interacts with ELOC and CUL5 in the presence of SPSB1 or SPSB2 or SPSB4. Forms a complex with ASL, ASS1 and HSP90AA1; the complex regulates cell-autonomous L-arginine synthesis and citrulline recycling while channeling extracellular L-arginine to nitric oxide synthesis pathway. The cofactor is heme b. FAD serves as cofactor. FMN is required as a cofactor. Requires (6R)-L-erythro-5,6,7,8-tetrahydrobiopterin as cofactor. Polyubiquitinated; mediated by SPSB1, SPSB2 and SPSB4, leading to proteasomal degradation.

Its subcellular location is the cytoplasm. It is found in the cytosol. It carries out the reaction 2 L-arginine + 3 NADPH + 4 O2 + H(+) = 2 L-citrulline + 2 nitric oxide + 3 NADP(+) + 4 H2O. Regulated by calcium/calmodulin. In terms of biological role, produces nitric oxide (NO) which is a messenger molecule with diverse functions throughout the body. In macrophages, NO mediates tumoricidal and bactericidal actions. Also has nitrosylase activity and mediates cysteine S-nitrosylation of cytoplasmic target proteins such PTGS2/COX2. As component of the iNOS-S100A8/9 transnitrosylase complex involved in the selective inflammatory stimulus-dependent S-nitrosylation of GAPDH implicated in regulation of the GAIT complex activity and probably multiple targets including ANXA5, EZR, MSN and VIM. Involved in inflammation, enhances the synthesis of pro-inflammatory mediators such as IL6 and IL8. This is Nitric oxide synthase, inducible (NOS2) from Bos taurus (Bovine).